Reading from the N-terminus, the 578-residue chain is Interleukin-10 receptor subunit alpha (578 aa).

The signal sequence occupies residues 1-21 (MLPCLVVLLAALLSLRLGSDA). The Extracellular segment spans residues 22 to 235 (HGTELPSPPS…LTRQYFTVTN (214 aa)). N-linked (GlcNAc...) asparagine glycans are attached at residues Asn-50, Asn-74, Asn-110, Asn-154, Asn-177, and Asn-189. A disulfide bridge links Cys-56 with Cys-75. Cys-202 and Cys-223 are joined by a disulfide. Residues 236–256 (VIIFFAFVLLLSGALAYCLAL) form a helical membrane-spanning segment. The Cytoplasmic segment spans residues 257 to 578 (QLYVRRRKKL…PLISSLQSSE (322 aa)). The interval 313 to 436 (LHGSTDSGFG…PPEPEVPGEE (124 aa)) is disordered. Over residues 316–332 (STDSGFGSTKPSLQTEE) the composition is skewed to polar residues. Positions 318–323 (DSGFGS) match the BTRC recognition motif motif. A compositionally biased stretch (low complexity) spans 357-371 (GDSCSSGSSNSTDSG). Polar residues predominate over residues 377-396 (PSLSPSTGPTWEQQVGSNSR).

It belongs to the type II cytokine receptor family. Interacts with IL10. Interacts with IL10RB. Interacts (via its cytoplasmic domain) with JAK1 (via N-terminus). Interacts with BTRC; this interaction leads to IL10RA ubiquitination and subsequent degradation. Interacts with STAT3. In terms of assembly, (Microbial infection) Interacts with human cytomegalovirus protein IL10. As to quaternary structure, (Microbial infection) Interacts with Epstein-Barr virus protein IL10. Post-translationally, phosphorylated. Phosphorylation of the cytoplasmic tail induced STAT3 activation. In terms of processing, ubiquitinated by BTRC; ubiquitination leads to endocytosis and subsequent degradation of IL10RA. As to expression, primarily expressed in hematopoetic cells including B-cells, T-cells, NK cells, monocytes and macrophages. Not expressed in non-hematopoetic cells such as fibroblasts or endothelial cells.

It is found in the cell membrane. The protein localises to the cytoplasm. Cell surface receptor for the cytokine IL10 that participates in IL10-mediated anti-inflammatory functions, limiting excessive tissue disruption caused by inflammation. Upon binding to IL10, induces a conformational change in IL10RB, allowing IL10RB to bind IL10 as well. In turn, the heterotetrameric assembly complex, composed of two subunits of IL10RA and IL10RB, activates the kinases JAK1 and TYK2 that are constitutively associated with IL10RA and IL10RB respectively. These kinases then phosphorylate specific tyrosine residues in the intracellular domain in IL10RA leading to the recruitment and subsequent phosphorylation of STAT3. Once phosphorylated, STAT3 homodimerizes, translocates to the nucleus and activates the expression of anti-inflammatory genes. In addition, IL10RA-mediated activation of STAT3 inhibits starvation-induced autophagy. This chain is Interleukin-10 receptor subunit alpha (IL10RA), found in Homo sapiens (Human).